The following is a 161-amino-acid chain: Eukaryotic translation initiation factor 5A-1 (161 aa).

Hypusine is present on K54.

The protein belongs to the eIF-5A family. Post-translationally, lys-54 undergoes hypusination, a unique post-translational modification that consists in the addition of a butylamino group from spermidine to lysine side chain, leading to the formation of the unusual amino acid hypusine. eIF-5As are the only known proteins to undergo this modification, which is essential for their function. Expressed specifically in the germline in the distal region of gonads where germ cells actively proliferate.

It is found in the cytoplasm. Functionally, translation factor that promotes translation elongation and termination, particularly upon ribosome stalling at specific amino acid sequence contexts. Binds between the exit (E) and peptidyl (P) site of the ribosome and promotes rescue of stalled ribosome: specifically required for efficient translation of polyproline-containing peptides as well as other motifs that stall the ribosome. Acts as a ribosome quality control (RQC) cofactor by joining the RQC complex to facilitate peptidyl transfer during CAT tailing step. Required for mitotic germ cell proliferation, gametogenesis after entry into meiosis, and localization of the P granule component pgl-1 on P granules. The polypeptide is Eukaryotic translation initiation factor 5A-1 (iff-1) (Caenorhabditis elegans).